The chain runs to 213 residues: MDRENILKAVKEARSLAKPRNFTQSLDLIINLKELDLSRPENRLKEQVVLPNGRGKEPKIAVIAKGDLAAQAEEMGLTVIRQDELEELGKNKKMAKKIANEHDFFIAQADMMPLVGKTLGPVLGPRGKMPQPVPANANLTPLVERLKKTVLINTRDKPLFHVLVGNEKMSDEELAENIEAILNTVSRKYEKGLYHVKSAYTKLTMGPPAQIEK.

Belongs to the universal ribosomal protein uL1 family. As to quaternary structure, part of the 50S ribosomal subunit.

Functionally, probably involved in E site tRNA release. Binds directly to 23S rRNA. Its function is as follows. Protein L1 is also a translational repressor protein, it controls the translation of its operon by binding to its mRNA. This Methanothermococcus thermolithotrophicus (Methanococcus thermolithotrophicus) protein is Large ribosomal subunit protein uL1.